A 381-amino-acid chain; its full sequence is Anhydro-N-acetylmuramic acid kinase (381 aa).

Gly13 to Asp20 serves as a coordination point for ATP.

Belongs to the anhydro-N-acetylmuramic acid kinase family.

The enzyme catalyses 1,6-anhydro-N-acetyl-beta-muramate + ATP + H2O = N-acetyl-D-muramate 6-phosphate + ADP + H(+). Its pathway is amino-sugar metabolism; 1,6-anhydro-N-acetylmuramate degradation. The protein operates within cell wall biogenesis; peptidoglycan recycling. In terms of biological role, catalyzes the specific phosphorylation of 1,6-anhydro-N-acetylmuramic acid (anhMurNAc) with the simultaneous cleavage of the 1,6-anhydro ring, generating MurNAc-6-P. Is required for the utilization of anhMurNAc either imported from the medium or derived from its own cell wall murein, and thus plays a role in cell wall recycling. This is Anhydro-N-acetylmuramic acid kinase from Francisella tularensis subsp. novicida (strain U112).